We begin with the raw amino-acid sequence, 490 residues long: COP9 signalosome complex subunit 2 (490 aa).

Acidic residues predominate over residues 1–30; sequence MSDDDFMQDSDQEYDFEYEDDEEEDTGDVD. Residues 1-32 form a disordered region; that stretch reads MSDDDFMQDSDQEYDFEYEDDEEEDTGDVDIE. The region spanning 250-418 is the PCI domain; the sequence is SEENWKEAQS…GVLELESRED (169 aa). The segment at 469–490 is disordered; the sequence is DTMRSMGSGKRGRRVGLTQRAY.

The protein belongs to the CSN2 family. Component of the COP9 signalosome (CSN) complex.

The protein resides in the cytoplasm. It localises to the nucleus. Component of the COP9 signalosome (CSN) complex that acts as an regulator of the ubiquitin (Ubl) conjugation pathway by mediating the deneddylation of the cullin subunit of SCF-type E3 ubiquitin-protein ligase complexes. The CSN complex is involved in the regulation of the circadian clock through its control of the stability of the SCF(FWD-1) complex. This Neurospora crassa (strain ATCC 24698 / 74-OR23-1A / CBS 708.71 / DSM 1257 / FGSC 987) protein is COP9 signalosome complex subunit 2 (csn-2).